We begin with the raw amino-acid sequence, 146 residues long: MRILVDADACPGKHMIEKAASENNVEVIMYCDINHRLESSYSEIKYVESGFQSVDMVIVNEVKKGDIVISQDYGLAALVLGKGAYAINPKGYIYDNDNIDRLLFERHMSGKIRRSGGKTFNPRKRMEEDDKRLYENLIFLIGKAKK.

This sequence belongs to the UPF0178 family.

The chain is UPF0178 protein CTC_02403 from Clostridium tetani (strain Massachusetts / E88).